Here is a 620-residue protein sequence, read N- to C-terminus: Membralin (620 aa).

The segment at 1-33 (MSEHVEPAAPGPGPNGGGGGPAPARGPRTPNLN) is disordered. Position 2 is an N-acetylserine (S2). Low complexity predominate over residues 22–31 (APARGPRTPN). T29 is subject to Phosphothreonine. The helical transmembrane segment at 70-90 (FFVLLKALFVLFVLAYIHIVF) threads the bilayer. An N-linked (GlcNAc...) asparagine glycan is attached at N189. 3 helical membrane-spanning segments follow: residues 302 to 322 (TSYLAAFAIMVIFTLSVSMLL), 346 to 366 (IAFPAAPLLTVILALVGMEAI), and 426 to 446 (YSSLALVTSWLFIQHSMIYFF). Disordered stretches follow at residues 474–517 (TPTA…GPVA) and 568–620 (SPLG…EVGS). Low complexity-rich tracts occupy residues 499 to 517 (PPALGPVSPGASGSPGPVA) and 568 to 593 (SPLGPAGGLPHAPQDSVPPSDSAASD).

The protein belongs to the membralin family. Interacts with ERLIN2.

It is found in the endoplasmic reticulum membrane. Functionally, may have a role in the ERAD pathway required for clearance of misfolded proteins in the endoplasmic reticulum (ER). Promotes survival of motor neurons, probably by protecting against ER stress. This is Membralin (TMEM259) from Homo sapiens (Human).